A 219-amino-acid chain; its full sequence is Poxin (219 aa).

Catalysis depends on His-17, which acts as the Proton donor. Catalysis depends on Tyr-138, which acts as the Shared with catalytic histidine of dimeric partner. Catalysis depends on Lys-142, which acts as the Proton acceptor; shared with catalytic histidine of dimeric partner.

Belongs to the poxin family. As to quaternary structure, homodimer.

It catalyses the reaction 2',3'-cGAMP + H2O = Gp(2'-5')Ap(3') + H(+). Functionally, nuclease that is responsible for viral evasion of host cGAS-STING innate immunity. Cleaves 2',3'-cGAMP which is produced by host cGAS following recognition of cytosolic DNA and blocks the subsequent 2',3'-cGAMP-mediated activation of TMEM173/STING, which normally spreads to adjacent cells and activates the interferon and NF-kappa-B immune responses. The sequence is that of Poxin (OPG188) from Homo sapiens (Human).